A 519-amino-acid chain; its full sequence is F-box only protein 31-A (519 aa).

Positions 11–37 are disordered; that stretch reads GQSGGCRRRQQRKGAGNDPELEDEEEE. An F-box domain is found at 54–100; that stretch reads PHSLLLLPPEILVEIFSLLPGTELGGLAQVCSKFRQILTTDTIWKRR. 4 residues coordinate Zn(2+): Cys-196, His-204, Cys-220, and His-226. The segment covering 369–390 has biased composition (basic and acidic residues); sequence REQRQTDNEEDDGRGAGPDKAE. Residues 369 to 424 are disordered; it reads REQRQTDNEEDDGRGAGPDKAEPAQQPAPLLRPPNEDANGADDDGDGGEQKPPNVQ.

The protein belongs to the FBXO31 family. In terms of assembly, part of a SCF (SKP1-cullin-F-box) protein ligase complex SCF(FBXO31).

It localises to the cytoplasm. It participates in protein modification; protein ubiquitination. Substrate-recognition component of the SCF(FBXO31) protein ligase complex, which specifically mediates the ubiquitination of proteins amidated at their C-terminus in response to oxidative stress, leading to their degradation by the proteasome. Fbxo31 specifically recognizes and binds C-terminal peptides bearing an amide: C-terminal amidation in response to oxidative stress takes place following protein fragmentation. The SCF(FBXO31) also plays a role in G1 arrest following DNA damage by mediating ubiquitination of phosphorylated cyclin-D1 (ccnd1), promoting its degradation by the proteasome, resulting in G1 arrest. The SCF(FBXO31) complex is however not a major regulator of ccnd1 stability during the G1/S transition. This chain is F-box only protein 31-A (fbxo31-a), found in Xenopus laevis (African clawed frog).